Consider the following 842-residue polypeptide: Alpha-glucan phosphorylase, H isozyme (842 aa).

Lysine 688 carries the N6-(pyridoxal phosphate)lysine modification.

This sequence belongs to the glycogen phosphorylase family. Pyridoxal 5'-phosphate is required as a cofactor.

It localises to the cytoplasm. The enzyme catalyses [(1-&gt;4)-alpha-D-glucosyl](n) + phosphate = [(1-&gt;4)-alpha-D-glucosyl](n-1) + alpha-D-glucose 1-phosphate. Phosphorylase is an important allosteric enzyme in carbohydrate metabolism. Enzymes from different sources differ in their regulatory mechanisms and in their natural substrates. However, all known phosphorylases share catalytic and structural properties. Its function is as follows. The H isoform exhibits higher affinity for branched polyglucans such as soluble starch or glycogen. The protein is Alpha-glucan phosphorylase, H isozyme of Vicia faba (Broad bean).